A 318-amino-acid polypeptide reads, in one-letter code: Retinol dehydrogenase 11 (318 aa).

Residues 1–21 (MVELMFPLLLLLLPFLLYMAA) traverse the membrane as a helical; Signal-anchor for type II membrane protein segment. Topologically, residues 22–318 (PQIRKMLSSG…SCDLLGLPID (297 aa)) are cytoplasmic. 48–54 (GANTGIG) contributes to the NADP(+) binding site. Lys-112 is modified (N6-acetyllysine). Position 177 (Ser-177) interacts with substrate. The active-site Proton acceptor is the Tyr-202.

It belongs to the short-chain dehydrogenases/reductases (SDR) family. In terms of assembly, interacts with SELENOF. Post-translationally, not glycosylated. Predominantly expressed in the epithelial cells of prostate, in both basal and luminal secretory cell populations. Expressed at low levels in spleen, thymus, testis, ovary, small intestine, colon, peripherical blood leukocytes, kidney, adrenal gland and fetal liver. Not detected in prostatic fibromuscular stromal cells, endothelial cells, or infiltrating lymphocytes.

The protein localises to the endoplasmic reticulum membrane. The enzyme catalyses all-trans-retinol + NADP(+) = all-trans-retinal + NADPH + H(+). It catalyses the reaction 11-cis-retinol + NADP(+) = 11-cis-retinal + NADPH + H(+). It carries out the reaction 9-cis-retinol + NADP(+) = 9-cis-retinal + NADPH + H(+). The catalysed reaction is 13-cis-retinol + NADP(+) = 13-cis-retinal + NADPH + H(+). Its pathway is cofactor metabolism; retinol metabolism. With respect to regulation, SELENOF decreases the retinol dehydrogenase activity. Functionally, retinol dehydrogenase with a clear preference for NADP. Displays high activity towards 9-cis, 11-cis and all-trans-retinol, and to a lesser extent on 13-cis-retinol. Exhibits a low reductive activity towards unsaturated medium-chain aldehydes such as cis -6-nonenal and no activity toward nonanal or 4-hydroxy-nonenal. Has no dehydrogenase activity towards steroid. This Homo sapiens (Human) protein is Retinol dehydrogenase 11 (RDH11).